Reading from the N-terminus, the 311-residue chain is Urease accessory protein UreD (311 aa).

It belongs to the UreD family. UreD, UreF and UreG form a complex that acts as a GTP-hydrolysis-dependent molecular chaperone, activating the urease apoprotein by helping to assemble the nickel containing metallocenter of UreC. The UreE protein probably delivers the nickel.

The protein resides in the cytoplasm. Functionally, required for maturation of urease via the functional incorporation of the urease nickel metallocenter. This chain is Urease accessory protein UreD, found in Synechococcus sp. (strain CC9902).